A 150-amino-acid polypeptide reads, in one-letter code: Large ribosomal subunit protein bL9 (150 aa).

It belongs to the bacterial ribosomal protein bL9 family.

Binds to the 23S rRNA. This Neisseria meningitidis serogroup C (strain 053442) protein is Large ribosomal subunit protein bL9.